The sequence spans 299 residues: ATP phosphoribosyltransferase (299 aa).

Belongs to the ATP phosphoribosyltransferase family. Long subfamily. Equilibrium between an active dimeric form, an inactive hexameric form and higher aggregates. Interconversion between the various forms is largely reversible and is influenced by the natural substrates and inhibitors of the enzyme. It depends on Mg(2+) as a cofactor.

It is found in the cytoplasm. The catalysed reaction is 1-(5-phospho-beta-D-ribosyl)-ATP + diphosphate = 5-phospho-alpha-D-ribose 1-diphosphate + ATP. It participates in amino-acid biosynthesis; L-histidine biosynthesis; L-histidine from 5-phospho-alpha-D-ribose 1-diphosphate: step 1/9. Feedback inhibited by histidine. Functionally, catalyzes the condensation of ATP and 5-phosphoribose 1-diphosphate to form N'-(5'-phosphoribosyl)-ATP (PR-ATP). Has a crucial role in the pathway because the rate of histidine biosynthesis seems to be controlled primarily by regulation of HisG enzymatic activity. This Buchnera aphidicola subsp. Diuraphis noxia protein is ATP phosphoribosyltransferase.